The primary structure comprises 68 residues: Ribosome modulation factor (68 aa).

This sequence belongs to the ribosome modulation factor family.

Its subcellular location is the cytoplasm. Functionally, during stationary phase, converts 70S ribosomes to an inactive dimeric form (100S ribosomes). The sequence is that of Ribosome modulation factor from Alcanivorax borkumensis (strain ATCC 700651 / DSM 11573 / NCIMB 13689 / SK2).